Reading from the N-terminus, the 565-residue chain is MLSVKIELLEALHQALEKLSPGAGSKAVFESPKVAAHGDLATTAAMQLAKPLKLNPRQLAENLRAELLVRAPFERWVEAIDIAGPGFINIKLKPEAKQQTVREVLSQGQQFGSQPGTGKRMLVEFVSANPTGPLHVGHGRQAALGDAICNLYQTQGWAVYREFYYNDAGVQIGTLASSTQLRARGFKPGDPEWPSGENAAAYNGDYIADIAADYLAKKTVHSDDRAFTASGDVEALDDIRLFAVAYLRHEQDLDLKAFAVHFDNYYLESSLYLSGKVDDVVKRLHDAGKTYEHDGALWLKSTEYGDDKDRVMRKGDGSYTYFVPDVAYHISKWERGFEKVVNIQGTDHHGTIARVRAGLQAANVGIPKGYPDYVLHTMVRVVRGGEEVKISKRAGSYVTLRDLIEWTSKDAVRFFLLSRKPDTEYTFDVDLAVAKNNDNPVYYVQYAHARICSVLAAWREKEGGDVASLGQADLSPLQSPQALALLLLLAKYPEMLTAAAAGFAPHDVTFYLRELAACYHSYYDAERILVDDDLIKRARLALVAATAQVLHNGLAVLGVSAPQKM.

Residues 128 to 138 (ANPTGPLHVGH) carry the 'HIGH' region motif.

It belongs to the class-I aminoacyl-tRNA synthetase family. Monomer.

The protein localises to the cytoplasm. It carries out the reaction tRNA(Arg) + L-arginine + ATP = L-arginyl-tRNA(Arg) + AMP + diphosphate. The polypeptide is Arginine--tRNA ligase (Albidiferax ferrireducens (strain ATCC BAA-621 / DSM 15236 / T118) (Rhodoferax ferrireducens)).